Here is a 79-residue protein sequence, read N- to C-terminus: Conotoxin Cal9.2a (79 aa).

Residues 1–23 form the signal peptide; it reads MNCYLILTVALLLTSAMTGTTTA. The propeptide occupies 24 to 33; sequence GQLNKKGVTL. 3 disulfides stabilise this stretch: Cys-41-Cys-58, Cys-46-Cys-68, and Cys-48-Cys-73.

In terms of tissue distribution, expressed by the venom duct.

It is found in the secreted. Its function is as follows. Probable neurotoxin with unknown target. Possibly targets ion channels. This is Conotoxin Cal9.2a from Californiconus californicus (California cone).